We begin with the raw amino-acid sequence, 284 residues long: Phosphonates import ATP-binding protein PhnC 2 (284 aa).

Residues 24-264 form the ABC transporter domain; sequence IRIDGISVRR…LEARIFPSLA (241 aa). 56–63 lines the ATP pocket; sequence GPSGVGKT.

This sequence belongs to the ABC transporter superfamily. Phosphonates importer (TC 3.A.1.9.1) family. As to quaternary structure, the complex is composed of two ATP-binding proteins (PhnC), two transmembrane proteins (PhnE) and a solute-binding protein (PhnD).

The protein localises to the cell inner membrane. The catalysed reaction is phosphonate(out) + ATP + H2O = phosphonate(in) + ADP + phosphate + H(+). Part of the ABC transporter complex PhnCDE involved in phosphonates import. Responsible for energy coupling to the transport system. This is Phosphonates import ATP-binding protein PhnC 2 from Rhodopseudomonas palustris (strain ATCC BAA-98 / CGA009).